A 343-amino-acid chain; its full sequence is N-acetyl-gamma-glutamyl-phosphate reductase (343 aa).

Residue Cys146 is part of the active site.

This sequence belongs to the NAGSA dehydrogenase family. Type 1 subfamily.

The protein resides in the cytoplasm. The enzyme catalyses N-acetyl-L-glutamate 5-semialdehyde + phosphate + NADP(+) = N-acetyl-L-glutamyl 5-phosphate + NADPH + H(+). Its pathway is amino-acid biosynthesis; L-arginine biosynthesis; N(2)-acetyl-L-ornithine from L-glutamate: step 3/4. In terms of biological role, catalyzes the NADPH-dependent reduction of N-acetyl-5-glutamyl phosphate to yield N-acetyl-L-glutamate 5-semialdehyde. This Paenarthrobacter aurescens (strain TC1) protein is N-acetyl-gamma-glutamyl-phosphate reductase.